Consider the following 237-residue polypeptide: uncharacterized protein (237 aa).

Positions 1–27 (MKSFLRKPKFWLLLLGGLSTSSIILSA) are cleaved as a signal peptide. The N-palmitoyl cysteine moiety is linked to residue Cys-28. The S-diacylglycerol cysteine moiety is linked to residue Cys-28.

Belongs to the MG307/MG309/MG338 family.

It localises to the membrane. This is an uncharacterized protein from Mycoplasma pneumoniae (strain ATCC 29342 / M129 / Subtype 1) (Mycoplasmoides pneumoniae).